The following is a 343-amino-acid chain: Glyceraldehyde-3-phosphate dehydrogenase (343 aa).

Residues 13 to 14 (TI) and G111 contribute to the NAD(+) site. Residue 140–142 (SCN) participates in D-glyceraldehyde 3-phosphate binding. C141 (nucleophile) is an active-site residue. NAD(+) is bound at residue R169. 195 to 196 (HA) is a binding site for D-glyceraldehyde 3-phosphate. Q303 lines the NAD(+) pocket.

This sequence belongs to the glyceraldehyde-3-phosphate dehydrogenase family. Homotetramer.

The protein localises to the cytoplasm. The catalysed reaction is D-glyceraldehyde 3-phosphate + phosphate + NADP(+) = (2R)-3-phospho-glyceroyl phosphate + NADPH + H(+). It catalyses the reaction D-glyceraldehyde 3-phosphate + phosphate + NAD(+) = (2R)-3-phospho-glyceroyl phosphate + NADH + H(+). It participates in carbohydrate degradation; glycolysis; pyruvate from D-glyceraldehyde 3-phosphate: step 1/5. This Sulfolobus acidocaldarius (strain ATCC 33909 / DSM 639 / JCM 8929 / NBRC 15157 / NCIMB 11770) protein is Glyceraldehyde-3-phosphate dehydrogenase.